The primary structure comprises 543 residues: Chaperonin GroEL (543 aa).

ATP contacts are provided by residues 29-32 (TLGP), 86-90 (DGTTT), glycine 413, 478-480 (NAA), and aspartate 494.

This sequence belongs to the chaperonin (HSP60) family. In terms of assembly, forms a cylinder of 14 subunits composed of two heptameric rings stacked back-to-back. Interacts with the co-chaperonin GroES.

It localises to the cytoplasm. The catalysed reaction is ATP + H2O + a folded polypeptide = ADP + phosphate + an unfolded polypeptide.. Its function is as follows. Together with its co-chaperonin GroES, plays an essential role in assisting protein folding. The GroEL-GroES system forms a nano-cage that allows encapsulation of the non-native substrate proteins and provides a physical environment optimized to promote and accelerate protein folding. This chain is Chaperonin GroEL, found in Lactobacillus gasseri (strain ATCC 33323 / DSM 20243 / BCRC 14619 / CIP 102991 / JCM 1131 / KCTC 3163 / NCIMB 11718 / NCTC 13722 / AM63).